The sequence spans 1310 residues: Rho family-interacting cell polarization regulator 2 (1310 aa).

Residues S123 and S178 each carry the phosphoserine modification. Residues 196–254 (MHNLGHKNTNTPKEPQPKRVEEVYRALKNGLDEYLEFHQTELDKLTAQLKDMKRNSRLG) form an involved in cell filopodia formation region. Residues 224–253 (NGLDEYLEFHQTELDKLTAQLKDMKRNSRL) adopt a coiled-coil conformation. The residue at position 508 (S508) is a Phosphoserine. The span at 588–608 (SSLSSQNEGTEDSSSASSRNS) shows a compositional bias: polar residues. Positions 588-639 (SSLSSQNEGTEDSSSASSRNSLGEDHEPKSHSKSDTVEPKKPSVDARSGTES) are disordered. Over residues 609 to 631 (LGEDHEPKSHSKSDTVEPKKPSV) the composition is skewed to basic and acidic residues. S682 is subject to Phosphoserine.

This sequence belongs to the RIPOR family. As to quaternary structure, homooligomer; homooligomerization is regulated by RHOC and leads to the formation of concatemers through the association of N- and C-termini. Interacts (phosphorylated form) with 14-3-3 proteins; these interactions occur during myogenic cell differentiation and also induces T cell proliferation arrest. Interacts (phosphorylated form) with HDAC6; this interaction occurs during early myogenic differentiation, prevents HDAC6 to deacetylate tubulin and also induces T cell proliferation arrest. Interacts with DYSF; this interaction occurs during early myogenic differentiation. Interacts with MYOF. Interacts (via active GTP- or inactive GDP-bound forms) with RHOA; this interaction is direct, blocks the loading of GTP to RHOA and decreases upon chemokine CCL19 stimulation in primary T lymphocytes. Interacts with RHOC. Interacts (via phosphorylated form) with YWHAB; this interaction occurs in a chemokine-dependent manner and does not compete for binding of RIPOR2 with RHOA nor blocks inhibition of RIPOR2-mediated RHOA activity. Interacts with YWHAE. Interacts with YWHAQ. In terms of processing, phosphorylated. Chemokine-induced phosphorylation in neutrophils occurs in a PKC- and AKT-dependent manner, resulting in RIPOR2 interaction with YWHAB and stabilization. Phosphorylated by PKCA, AKT1 and MAPKAPK1A; in vitro. Expressed in the cochlea (at protein level).

It is found in the cytoplasm. It localises to the cytoskeleton. The protein resides in the cell projection. Its subcellular location is the filopodium. The protein localises to the apical cell membrane. It is found in the stereocilium. It localises to the stereocilium membrane. Functionally, acts as an inhibitor of the small GTPase RHOA and plays several roles in the regulation of myoblast and hair cell differentiation, lymphocyte T proliferation and neutrophil polarization. Plays a role in fetal mononuclear myoblast differentiation by promoting filopodia and myotube formation. Maintains naive T lymphocytes in a quiescent state and prevents chemokine-induced T lymphocyte responses, such as cell adhesion, polarization and migration. Involved also in the regulation of neutrophil polarization, chemotaxis and adhesion. Required for normal development of inner and outer hair cell stereocilia within the cochlea of the inner ear. Plays a role for maintaining the structural organization of the basal domain of stereocilia. Involved in mechanosensory hair cell function. Required for normal hearing. This Rattus norvegicus (Rat) protein is Rho family-interacting cell polarization regulator 2.